The sequence spans 367 residues: DNA replication and repair protein RecF (367 aa).

An ATP-binding site is contributed by 30-37 (GANGSGKT).

Belongs to the RecF family.

It localises to the cytoplasm. The RecF protein is involved in DNA metabolism; it is required for DNA replication and normal SOS inducibility. RecF binds preferentially to single-stranded, linear DNA. It also seems to bind ATP. The polypeptide is DNA replication and repair protein RecF (Pseudomonas fluorescens (strain Pf0-1)).